Here is a 556-residue protein sequence, read N- to C-terminus: Glutamine--tRNA ligase (556 aa).

Residues 34–44 (PEPNGYLHIGH) carry the 'HIGH' region motif. Residues 35-37 (EPN) and 41-47 (HIGHAKS) contribute to the ATP site. Residues Asp-67 and Tyr-212 each coordinate L-glutamine. ATP contacts are provided by residues Thr-231, 261-262 (RL), and 269-271 (MSK). A 'KMSKS' region motif is present at residues 268–272 (VMSKR).

This sequence belongs to the class-I aminoacyl-tRNA synthetase family. Monomer.

The protein localises to the cytoplasm. It carries out the reaction tRNA(Gln) + L-glutamine + ATP = L-glutaminyl-tRNA(Gln) + AMP + diphosphate. The protein is Glutamine--tRNA ligase of Vibrio cholerae serotype O1 (strain ATCC 39315 / El Tor Inaba N16961).